A 489-amino-acid chain; its full sequence is Glycogen synthase (489 aa).

Lysine 18 contacts ADP-alpha-D-glucose.

It belongs to the glycosyltransferase 1 family. Bacterial/plant glycogen synthase subfamily.

The enzyme catalyses [(1-&gt;4)-alpha-D-glucosyl](n) + ADP-alpha-D-glucose = [(1-&gt;4)-alpha-D-glucosyl](n+1) + ADP + H(+). Its pathway is glycan biosynthesis; glycogen biosynthesis. Functionally, synthesizes alpha-1,4-glucan chains using ADP-glucose. The protein is Glycogen synthase of Rhodopseudomonas palustris (strain BisA53).